A 567-amino-acid chain; its full sequence is MNILNLKIIMFLLISNIIVVGGAWATSTCPDWPATRIAVEINALEQQLNKWSAAYHQQGHSPVTDDIYDQLQDKLRVWQSCRGLPDKTESQPIPGKGQFLHPVAHTGLKKLKDETALTRWMAGRKNLWVQPKVDGVAVTLVYHGGKLVQLLSRGNGVKGQNWTEKAPFISAIPQYIANAPALLTLQGELFLLMDGHQQAKSGGVNARSTVAGALMRKSPSPLLAQVGVFIWAWPDGPTTMKEKVALLQVMGFPFTAKYSEPVMSHLDVVQWRQFWFQAPLPFVTDGVVVRQEEEPAGRYWQATPGQWSMAWKYPPLQHIAEVKDIHFTLGRTGKGTVVLEVLPIKIDDKWIRRVNIGSVTRWKQWDIAPGDHITLALAGHGIPRLDNVVWRVHQRNTITAPNWDKFHQLSCFQRLPHGCEPQFLSRLIWLSGPGGLDIGGIGGGFWQELIHHELINDLVGWLLLTPEQIASIPGIGNARAEKIYQQFQRAKQQPFSRWLLALGFPQVVSVDAQWQVVLRRSLSEWATMAGIGQMRAKQIKHFLDHPDVQALADFLSTQKVVGFELTE.

Catalysis depends on Lys-132, which acts as the N6-AMP-lysine intermediate.

The protein belongs to the NAD-dependent DNA ligase family. LigB subfamily.

The enzyme catalyses NAD(+) + (deoxyribonucleotide)n-3'-hydroxyl + 5'-phospho-(deoxyribonucleotide)m = (deoxyribonucleotide)n+m + AMP + beta-nicotinamide D-nucleotide.. Its function is as follows. Catalyzes the formation of phosphodiester linkages between 5'-phosphoryl and 3'-hydroxyl groups in double-stranded DNA using NAD as a coenzyme and as the energy source for the reaction. This chain is DNA ligase B, found in Yersinia pseudotuberculosis serotype O:1b (strain IP 31758).